We begin with the raw amino-acid sequence, 263 residues long: Neuferricin (263 aa).

An N-terminal signal peptide occupies residues 1-22 (MLRICGLGVVLSLAVAAVAVMA). One can recognise a Cytochrome b5 heme-binding domain in the interval 35 to 134 (IRLFLPEELA…KNYVFVGRLV (100 aa)). Positions 220–249 (VRTTGPPSDQQDNPRHSNHGDLDNPNLEEY) are disordered. The span at 231–241 (DNPRHSNHGDL) shows a compositional bias: basic and acidic residues.

It belongs to the cytochrome b5 family. MAPR subfamily. As to expression, expressed in various tissues including brain, heart, adrenal gland, and kidney. In the brain, mainly expressed in pyramidal cells around the CA3 region of Ammon horn in hippocampus. Present in brain (at protein level).

The protein localises to the secreted. Functionally, heme-binding protein which promotes neuronal but not astrocyte differentiation. This is Neuferricin from Mus musculus (Mouse).